We begin with the raw amino-acid sequence, 309 residues long: Olfactory receptor 7A17 (309 aa).

The Extracellular segment spans residues 1-25; sequence MEPENDTGISEFVLLGLSEEPELQP. N5 carries an N-linked (GlcNAc...) asparagine glycan. The helical transmembrane segment at 26 to 46 threads the bilayer; that stretch reads FLFGLFLSMYLVTVLGNLLII. Topologically, residues 47–54 are cytoplasmic; sequence LATISDSH. The chain crosses the membrane as a helical span at residues 55-75; that stretch reads LHTPMYFFLSNLSFADICFIS. Topologically, residues 76–99 are extracellular; that stretch reads TTIPKMLINIQTQSRVITYAGCIT. Residues C97 and C189 are joined by a disulfide bond. A helical membrane pass occupies residues 100–120; it reads QMCFFVLFGGLDSLLLAVMAY. The Cytoplasmic portion of the chain corresponds to 121–139; it reads DRFVAICHPLHYTVIMNPR. Residues 140–160 form a helical membrane-spanning segment; it reads LCGLLVLASWMIAALNSLSQS. The Extracellular segment spans residues 161–197; that stretch reads LMVLWLSFCTDLEIPHFFCELNQVIHLACSDTFLNDM. Residues 198–217 form a helical membrane-spanning segment; it reads GMYFAAGLLAGGPLVGILCS. Residues 218-237 lie on the Cytoplasmic side of the membrane; it reads YSKIVSSIRAISSAQGKYKA. A helical membrane pass occupies residues 238-258; sequence FSTCASHLSVVSLFCCTGLGV. Residues 259-271 lie on the Extracellular side of the membrane; sequence YLTSAATHNSHTS. Residues 272 to 292 traverse the membrane as a helical segment; the sequence is ATASVMYTVATPMLNPFIYSL. The Cytoplasmic segment spans residues 293 to 309; that stretch reads RNKDIKRALKMSFRGKQ.

The protein belongs to the G-protein coupled receptor 1 family.

It is found in the cell membrane. Odorant receptor. The chain is Olfactory receptor 7A17 (OR7A17) from Homo sapiens (Human).